Here is a 460-residue protein sequence, read N- to C-terminus: tRNA hydroxylation protein P (460 aa).

It belongs to the peptidase U32 family.

Involved in prephenate-dependent formation of 5-hydroxyuridine (ho5U) modification at position 34 in tRNAs, the first step in 5-carboxymethoxyuridine (cmo5U) biosynthesis. This is tRNA hydroxylation protein P from Haemophilus influenzae (strain ATCC 51907 / DSM 11121 / KW20 / Rd).